Here is a 254-residue protein sequence, read N- to C-terminus: UstYa family oxidase phomYc' (254 aa).

A helical membrane pass occupies residues 38-58; that stretch reads LVLVLQSVLIISLLASLHILG. A glycan (N-linked (GlcNAc...) asparagine) is linked at asparagine 64. Residues 138–142 carry the HXXHC 1 motif; that stretch reads HQLHC. Asparagine 159 carries N-linked (GlcNAc...) asparagine glycosylation. An HXXHC 2 motif is present at residues 173 to 177; sequence HIDHC.

It belongs to the ustYa family.

The protein resides in the membrane. The protein operates within mycotoxin biosynthesis. UstYa family oxidase; part of the gene cluster that mediates the biosynthesis of the phomopsins, a group of hexapeptide mycotoxins which infects lupins and causes lupinosis disease in livestock. Within the pathway, phomYc' catalyzes the desaturation of the Ile moiety into 2,3-dehydroisoleucine (dIle). The pathway starts with the processing of the precursor phomA' by several endopeptidases including kexin proteases as well as the cluster-specific S41 family peptidase phomP1 and the oligopeptidase phomG' to produce 10 identical copies of the hexapeptide Tyr-Val-Ile-Pro-Ile-Asp. After being excised from the precursor peptide, the core peptides are cyclized and modified post-translationally by enzymes encoded within the gene cluster. The timing and order of proteolysis of the phomA' precursor and PTMs are still unknown. Two tyrosinase-like enzymes, phomQ1' and phomQ2, catalyze the chlorination and hydroxylation of Tyr, respectively. PhomYb, is proposed to be involved in the construction of the macrocyclic structure. The other 4 ustYa family proteins may be involved in PTMs that generate the unique structure of phomopsin A. PhomYa' is required for the hydroxylation of C-beta of Tyr. PhomYc', phomYd', and phomYe are responsible for the biosynthesis of 2,3-dehydroisoleucine (dIle), 2,3-dehydroaspartic acid (dAsp), and 3,4-dehydroproline (dPro), respectively. While dIle formation by phomYc' is indispensable for the installation of dAsp by phomYd', the order of the other PTMs have not been elucidated yet. Most of the biosynthetic enzymes likely have broad substrate specificity, and thus, there might be a metabolic grid from a precursor to phomopsin A. The enzyme(s) responsible for the biosynthesis of 3,4-dehydrovaline (dVal) have also not been identified yet. Finally, phomM' acts as an S-adenosylmethionine-dependent alpha-N-methyltransferase that catalyzes two successive N-methylation reactions, converting N-desmethyl-phomopsin A to phomopsin A and phomopsin A further to an N,N-dimethylated congener called phomopsin E. The protein is UstYa family oxidase phomYc' of Diaporthe leptostromiformis (Lupinosis disease fungus).